Reading from the N-terminus, the 445-residue chain is Trigger factor (445 aa).

A PPIase FKBP-type domain is found at 162–247 (GDQVTIDAIG…IKAVHTAEPT (86 aa)).

Belongs to the FKBP-type PPIase family. Tig subfamily.

The protein resides in the cytoplasm. The catalysed reaction is [protein]-peptidylproline (omega=180) = [protein]-peptidylproline (omega=0). Functionally, involved in protein export. Acts as a chaperone by maintaining the newly synthesized protein in an open conformation. Functions as a peptidyl-prolyl cis-trans isomerase. This chain is Trigger factor, found in Rickettsia rickettsii (strain Sheila Smith).